A 308-amino-acid polypeptide reads, in one-letter code: 3'(2'),5'-bisphosphate nucleotidase 1 (308 aa).

A2 is subject to N-acetylalanine. The active-site Proton acceptor is D51. Positions 74, 117, 119, and 120 each coordinate Mg(2+). T122 serves as the catalytic Proton acceptor. Residue T122 is modified to Phosphothreonine. The AMP site is built by T195, H198, G220, and K224. S240 carries the post-translational modification Phosphoserine. K244 bears the N6-succinyllysine mark. A Mg(2+)-binding site is contributed by D247.

This sequence belongs to the inositol monophosphatase superfamily. Requires Mg(2+) as cofactor. In terms of tissue distribution, highly expressed in heart, brain, spleen, lung, liver, skeletal muscle, kidney and testis.

The catalysed reaction is adenosine 3',5'-bisphosphate + H2O = AMP + phosphate. It catalyses the reaction adenosine 2',5'-bisphosphate + H2O = AMP + phosphate. It carries out the reaction 3'-phosphoadenylyl sulfate + H2O = adenosine 5'-phosphosulfate + phosphate. The enzyme catalyses 1D-myo-inositol 1,4-bisphosphate + H2O = 1D-myo-inositol 4-phosphate + phosphate. The catalysed reaction is 1D-myo-inositol 1,3,4-trisphosphate + H2O = 1D-myo-inositol 3,4-bisphosphate + phosphate. With respect to regulation, inhibited by Li(+) and Ca(2+), but not by Na(+). Its function is as follows. Phosphatase that converts 3'(2')-phosphoadenosine 5'-phosphate (PAP) to AMP and adenosine 3'-phosphate 5'-phosphosulfate (PAPS) to adenosine 5'-phosphosulfate (APS). Is also able to hydrolyze inositol 1,4-bisphosphate (Ins(1,4)P2) and inositol 1,3,4-trisphosphate (Ins(1,3,4)P3), but is not active on AMP, 3'-AMP, fructose-1,6-bisphosphate, Ins(1)P, Ins(2)P and Ins(1,4,5)P3. Probably prevents the toxic accumulation of PAP, a compound which inhibits a variety of proteins, including PAPS-utilizing enzymes such as sulfotransferases, and RNA processing enzymes. Could also play a role in inositol recycling and phosphoinositide metabolism. This is 3'(2'),5'-bisphosphate nucleotidase 1 (Bpnt1) from Rattus norvegicus (Rat).